The following is a 115-amino-acid chain: Secapin (115 aa).

The signal sequence occupies residues 1 to 24 (MRFQVYILHLCFFILVVLTYLSQG). A propeptide spanning residues 25-90 (QSYTTTTTTS…STENFDITNR (66 aa)) is cleaved from the precursor. A disulfide bond links Cys-99 and Cys-110.

It belongs to the secapin family. As to expression, expressed in the epidermis, fat body and venom gland.

The protein resides in the secreted. Functionally, serine protease inhibitor which exhibits antifibrinolytic, antielastolytic and antimicrobial activities. Displays antimicrobial activity against bacteria and fungi. Likely functions in the innate immune response to microbial infection and possibly in the venom, as an antifibrinolytic agent. The recombinant form inhibits trypsin (IC(50)=80.02 nM, Ki=127.25 nM), chymotrypsin (IC(50)=393.78 nM, Ki=432.59 nM), the microbial serine proteases subtilisin A (IC(50)=379.20 nM, Ki=492.77 nM) and proteinase K (IC(50)=189.43 nM, Ki=271.76 nM), plasmin (IC(50)=457.98 nM, Ki=502.91 nM), human elastase (IC(50)=347.81 nM, Ki=469.90 nM) and porcine elastase (IC(50)=94.70 nM, Ki=125.62 nM). Does not inhibit thrombin. Binds to human plasmin and inhibits the plasmin-mediated degradation of fibrin to fibrin degradation products, indicating its role as an anti-fibrinolytic agent. Also binds to bacterial and fungal surfaces. Exhibits antimicrobial activity against the Gram-positive bacteria B.thuringiensis (MIC=4.21 uM) and P.larvae (MIC=11.13 uM), the Gram-negative bacteria E.coli (MIC=6.50 uM) and the multidrug-resistant A.baumannii (MIC=5 ug/ml, MBC=10 ug/ml), as well as against the fungus B.bassiana (IC(50)=2.57 uM). The synthetic peptide also exhibits antimicrobial activity against the Gram-positive bacterium P.larvae (MIC=41.12 uM), the Gram-negative bacterium P.aeruginosa (MIC=65.75 uM), and the fungus B.bassiana (IC(50)=44.27 uM). Is also able to prevent A.baumannii biofilm formation and eliminate established A.baumannii biofilms. In vitro, does not induce an inflammatory response and has no cytotoxic activity against mammalian cells. This chain is Secapin, found in Apis cerana (Indian honeybee).